The chain runs to 322 residues: Solute carrier family 35 member B1 (322 aa).

The next 8 membrane-spanning stretches (helical) occupy residues 12–32 (LRLPLCFLGVFVCYFYYGILQ), 51–71 (FALTLVFIQCVVNAVFAKILI), 85–105 (WLYAACSVSYLGAMVSSNSAL), 136–156 (YPMAKYLCVLLIVAGVALFMY), 168–188 (TIGYGELLLLLSLTLDGLTGV), 210–230 (LWSTLLLGAGILFTGELWEFL), 243–263 (ILLFGLTSALGQSFIFMTVVY), and 285–305 (VILFANPISPMQWVGTVLVFL). A Di-lysine motif motif is present at residues 318 to 322 (KKTSH).

Belongs to the nucleotide-sugar transporter family. SLC35B subfamily.

It localises to the endoplasmic reticulum membrane. It catalyses the reaction ADP(in) + ATP(out) = ADP(out) + ATP(in). The catalysed reaction is UDP(out) + ATP(in) = UDP(in) + ATP(out). It carries out the reaction UTP(out) + ATP(in) = UTP(in) + ATP(out). The enzyme catalyses dATP(out) + ATP(in) = dATP(in) + ATP(out). In terms of biological role, ATP:ADP antiporter that catalyzes the exchange of ATP and ADP across the endoplasmic reticulum (ER) membrane. Imports ATP from the cytosol to the ER lumen and exports ADP in the opposite direction. Regulates ER energy metabolism and protein biogenesis. Appears to be part of a calcium-dependent ER to cytosol low energy response axis, where calcium efflux from ER to the cytosol triggers ATP import into the ER lumen to maintain sufficient ATP supply. Provides ATP to ER chaperone HSPA5 that drives protein folding and trafficking in the ER. Can transport dATP, UTP or UDP in exchange for ATP, but the physiological relevance of this process remains to be established. This Bos taurus (Bovine) protein is Solute carrier family 35 member B1 (SLC35B1).